We begin with the raw amino-acid sequence, 98 residues long: MSKVCEISGKRPIVANSIQRRGKAKREGGVGKKTTGISKRRQYPNLQKVRVRVAGQEITFRVAASHIPKVYELVERAKGLKLEGLSPKEIKKELLKLL.

In terms of assembly, part of the 50S ribosomal subunit.

The sequence is that of Large ribosomal subunit protein bL28 (rpmB) from Thermus thermophilus (strain ATCC 27634 / DSM 579 / HB8).